The chain runs to 180 residues: Segregation and condensation protein B (180 aa).

Belongs to the ScpB family. In terms of assembly, homodimer. Homodimerization may be required to stabilize the binding of ScpA to the Smc head domains. Component of a cohesin-like complex composed of ScpA, ScpB and the Smc homodimer, in which ScpA and ScpB bind to the head domain of Smc. The presence of the three proteins is required for the association of the complex with DNA.

The protein resides in the cytoplasm. Functionally, participates in chromosomal partition during cell division. May act via the formation of a condensin-like complex containing Smc and ScpA that pull DNA away from mid-cell into both cell halves. The protein is Segregation and condensation protein B of Staphylococcus aureus (strain Mu3 / ATCC 700698).